Here is a 271-residue protein sequence, read N- to C-terminus: Putative hydro-lyase OCAR_7359/OCA5_c07590 (271 aa).

This sequence belongs to the D-glutamate cyclase family.

This Afipia carboxidovorans (strain ATCC 49405 / DSM 1227 / KCTC 32145 / OM5) (Oligotropha carboxidovorans) protein is Putative hydro-lyase OCAR_7359/OCA5_c07590.